The primary structure comprises 376 residues: Multiphosphoryl transfer protein (376 aa).

One can recognise a PTS EIIA type-2 domain in the interval 2–142 (FQLSVQDIHP…EELRALLMGE (141 aa)). Residue His62 is the Tele-phosphohistidine intermediate; for EIIA activity of the active site. Residue His62 is modified to Phosphohistidine; by HPr. The m domain stretch occupies residues 156–284 (TLDVIASSLV…LTSDDALTDD (129 aa)). The region spanning 285–375 (VLSAEFVVRN…DAIAAGLGEG (91 aa)) is the HPr domain. His299 serves as the catalytic Pros-phosphohistidine intermediate; for HPr activity. At His299 the chain carries Phosphohistidine; by EI.

It is found in the cytoplasm. Functionally, the phosphoenolpyruvate-dependent sugar phosphotransferase system (sugar PTS), a major carbohydrate active transport system, catalyzes the phosphorylation of incoming sugar substrates concomitantly with their translocation across the cell membrane. The enzyme II FruAB PTS system is involved in fructose transport. In Salmonella typhi, this protein is Multiphosphoryl transfer protein (fruB).